Here is a 500-residue protein sequence, read N- to C-terminus: NAD(P)H-quinone oxidoreductase chain 4, chloroplastic (500 aa).

The next 14 membrane-spanning stretches (helical) occupy residues 3–23, 37–57, 87–107, 113–130, 134–154, 167–187, 208–228, 242–262, 272–292, 305–325, 330–350, 386–406, 416–436, and 462–482; these read FFPW…LIFF, ICIC…HFQL, IGPI…AWPI, LFHF…GSFS, LLLF…LLSM, FILY…GMGL, ALEI…SPII, HYST…YGLV, AHSI…IYAA, IAYS…SITD, GAVL…FLAG, LALP…GIIT, ILIT…SLSM, and LFVS…PDFV.

Belongs to the complex I subunit 4 family.

It localises to the plastid. It is found in the chloroplast thylakoid membrane. The catalysed reaction is a plastoquinone + NADH + (n+1) H(+)(in) = a plastoquinol + NAD(+) + n H(+)(out). It catalyses the reaction a plastoquinone + NADPH + (n+1) H(+)(in) = a plastoquinol + NADP(+) + n H(+)(out). This Platanus occidentalis (Sycamore) protein is NAD(P)H-quinone oxidoreductase chain 4, chloroplastic.